The chain runs to 525 residues: MTENIHKHRILILDFGSQYTQLVARRVRELGVYCELWAWDVTEAQIRDFNPSGIILSGGPESTTEENSPRAPQYVFEAGVPVFGVCYGMQTMAMQLGGHVEASNEREFGYAQVEVVNDSALVRGIEDALTADGKPLLDVWMSHGDKVTAIPSDFITVASTESCPFAIMANEEKRFYGVQFHPEVTHTRQGMRMLERFVRDICQCEALWTPAKIIDDAVARIREQVGDDKVILGLSGGVDSSVTAMLLHRAIGKNLTCVFVDNGLLRLNEAEQVLDMFGDHFGLNIVHVPAEDRFLSALAGENDPEAKRKIIGRVFVEVFDEEALKLEDVKWLAQGTIYPDVIESAASATGKAHVIKSHHNVGGLPKEMKMGLVEPLKELFKDEVRKIGLELGLPYDMLYRHPFPGPGLGVRVLGEVKKEYCDLLRRADAIFIEELRKADLYDKVSQAFTVFLPVRSVGVMGDGRKYDWVVSLRAVETIDFMTAHWAHLPYDFLGRVSNRIINEVNGISRVVYDISGKPPATIEWE.

Residues Arg9–Leu207 enclose the Glutamine amidotransferase type-1 domain. Catalysis depends on Cys86, which acts as the Nucleophile. Catalysis depends on residues His181 and Glu183. The GMPS ATP-PPase domain occupies Trp208–Arg400. Residue Ser235 to Ser241 participates in ATP binding.

As to quaternary structure, homodimer.

It carries out the reaction XMP + L-glutamine + ATP + H2O = GMP + L-glutamate + AMP + diphosphate + 2 H(+). It functions in the pathway purine metabolism; GMP biosynthesis; GMP from XMP (L-Gln route): step 1/1. In terms of biological role, catalyzes the synthesis of GMP from XMP. The protein is GMP synthase [glutamine-hydrolyzing] of Escherichia coli (strain K12 / MC4100 / BW2952).